A 289-amino-acid chain; its full sequence is MKVLVNNHLVEREDATVDIEDRGYQFGDGVYEVVRLYNGKFFTYNEHIDRLYASAAKIDLVIPYSKEELRELLEKLVAENNINTGNVYLQVTRGVQNPRNHVIPDDFPLEGVLTAAAREVPRNERQFVEGGTAITEEDVRWLRCDIKSLNLLGNILAKNKAHQQNALEAILHRGEQVTECSASNVSIIKDGVLWTHAADNLILNGITRQVIIDVAKKNGIPVKEADFTLTDLREADEVFISSTTIEITPITHIDGVQVADGKRGPITAQLHQYFVEEITRACGELEFAK.

Tyrosine 31 lines the substrate pocket. Residue arginine 50 coordinates pyridoxal 5'-phosphate. Substrate is bound by residues arginine 99 and histidine 101. Residue lysine 147 is modified to N6-(pyridoxal phosphate)lysine. Glutamate 179 contacts pyridoxal 5'-phosphate.

Belongs to the class-IV pyridoxal-phosphate-dependent aminotransferase family. Homodimer. The cofactor is pyridoxal 5'-phosphate.

It carries out the reaction D-alanine + 2-oxoglutarate = D-glutamate + pyruvate. Acts on the D-isomers of alanine, leucine, aspartate, glutamate, aminobutyrate, norvaline and asparagine. The enzyme transfers an amino group from a substrate D-amino acid to the pyridoxal phosphate cofactor to form pyridoxamine and an alpha-keto acid in the first half-reaction. The second half-reaction is the reverse of the first, transferring the amino group from the pyridoxamine to a second alpha-keto acid to form the product D-amino acid via a ping-pong mechanism. This is an important process in the formation of D-alanine and D-glutamate, which are essential bacterial cell wall components. The sequence is that of D-alanine aminotransferase (dat) from Listeria monocytogenes serotype 1/2a (strain 10403S).